The sequence spans 340 residues: DNA-directed RNA polymerase subunit alpha (340 aa).

An alpha N-terminal domain (alpha-NTD) region spans residues 1–236 (MLSLSKNWNT…EQLQLFISFE (236 aa)). Positions 251 to 340 (FSPYLLKRVD…LSKRYEDSYN (90 aa)) are alpha C-terminal domain (alpha-CTD).

The protein belongs to the RNA polymerase alpha chain family. In terms of assembly, homodimer. The RNAP catalytic core consists of 2 alpha, 1 beta, 1 beta' and 1 omega subunit. When a sigma factor is associated with the core the holoenzyme is formed, which can initiate transcription.

It carries out the reaction RNA(n) + a ribonucleoside 5'-triphosphate = RNA(n+1) + diphosphate. Its function is as follows. DNA-dependent RNA polymerase catalyzes the transcription of DNA into RNA using the four ribonucleoside triphosphates as substrates. This Rickettsia africae (strain ESF-5) protein is DNA-directed RNA polymerase subunit alpha.